A 505-amino-acid polypeptide reads, in one-letter code: L-carnitine/gamma-butyrobetaine antiporter (505 aa).

The next 12 helical transmembrane spans lie at 10-30, 51-71, 92-112, 143-163, 195-215, 231-251, 263-283, 316-336, 347-367, 403-423, 446-466, and 475-495; these read IEPKVFFPPLIIVGILCWLTV, WGWAFEWYMIVMLFGWFWLVF, IFMMFASCTSAAVLFWGSIEI, GPLPWATYSFLSVAFAYFFFV, FYLVALIFAMGTSLGLATPLV, LDAIIITCWIILNAICVACGL, SYLSFLMLGWVFIVSGASFIM, WTVFYWAWWVIYAIQMSIFLA, LCFGMVMGLTASTWILWTVLG, LSTATMWGFFILCFIATVTLI, LLVRIGWSVLVGIIGIVLLAL, and AIIAGGCPLFFVNIMVTLSFI.

It belongs to the BCCT transporter (TC 2.A.15) family. CaiT subfamily. Homotrimer.

Its subcellular location is the cell inner membrane. It catalyses the reaction 4-(trimethylamino)butanoate(in) + (R)-carnitine(out) = 4-(trimethylamino)butanoate(out) + (R)-carnitine(in). Its pathway is amine and polyamine metabolism; carnitine metabolism. Catalyzes the exchange of L-carnitine for gamma-butyrobetaine. The chain is L-carnitine/gamma-butyrobetaine antiporter from Salmonella paratyphi A (strain ATCC 9150 / SARB42).